A 378-amino-acid chain; its full sequence is UDP-N-acetylglucosamine--N-acetylmuramyl-(pentapeptide) pyrophosphoryl-undecaprenol N-acetylglucosamine transferase (378 aa).

UDP-N-acetyl-alpha-D-glucosamine contacts are provided by residues 13 to 15, Asn124, Arg165, Ser193, and Gln294; that span reads TGG.

It belongs to the glycosyltransferase 28 family. MurG subfamily.

The protein resides in the cell inner membrane. The enzyme catalyses di-trans,octa-cis-undecaprenyl diphospho-N-acetyl-alpha-D-muramoyl-L-alanyl-D-glutamyl-meso-2,6-diaminopimeloyl-D-alanyl-D-alanine + UDP-N-acetyl-alpha-D-glucosamine = di-trans,octa-cis-undecaprenyl diphospho-[N-acetyl-alpha-D-glucosaminyl-(1-&gt;4)]-N-acetyl-alpha-D-muramoyl-L-alanyl-D-glutamyl-meso-2,6-diaminopimeloyl-D-alanyl-D-alanine + UDP + H(+). Its pathway is cell wall biogenesis; peptidoglycan biosynthesis. Cell wall formation. Catalyzes the transfer of a GlcNAc subunit on undecaprenyl-pyrophosphoryl-MurNAc-pentapeptide (lipid intermediate I) to form undecaprenyl-pyrophosphoryl-MurNAc-(pentapeptide)GlcNAc (lipid intermediate II). The sequence is that of UDP-N-acetylglucosamine--N-acetylmuramyl-(pentapeptide) pyrophosphoryl-undecaprenol N-acetylglucosamine transferase from Agrobacterium fabrum (strain C58 / ATCC 33970) (Agrobacterium tumefaciens (strain C58)).